The primary structure comprises 580 residues: Aspartate--tRNA ligase (580 aa).

Position 173 (E173) interacts with L-aspartate. Residues 195-198 (QIYK) form an aspartate region. R217 is an L-aspartate binding site. ATP-binding positions include 217 to 219 (RDE) and Q226. H443 serves as a coordination point for L-aspartate. E477 serves as a coordination point for ATP. R484 contributes to the L-aspartate binding site. 529–532 (GIER) contacts ATP.

It belongs to the class-II aminoacyl-tRNA synthetase family. Type 1 subfamily. Homodimer.

The protein localises to the cytoplasm. The enzyme catalyses tRNA(Asp) + L-aspartate + ATP = L-aspartyl-tRNA(Asp) + AMP + diphosphate. Its function is as follows. Catalyzes the attachment of L-aspartate to tRNA(Asp) in a two-step reaction: L-aspartate is first activated by ATP to form Asp-AMP and then transferred to the acceptor end of tRNA(Asp). This is Aspartate--tRNA ligase from Malacoplasma penetrans (strain HF-2) (Mycoplasma penetrans).